We begin with the raw amino-acid sequence, 378 residues long: Decaprenyl-diphosphate synthase subunit 1 (378 aa).

Residues K72, R75, and H130 each coordinate isopentenyl diphosphate. Mg(2+) contacts are provided by D137 and D141. Residue R147 participates in isopentenyl diphosphate binding.

The protein belongs to the FPP/GGPP synthase family. As to quaternary structure, heterotetramer of 2 dps1 and 2 dlp1 subunits. Mg(2+) is required as a cofactor.

The protein localises to the mitochondrion. It catalyses the reaction 7 isopentenyl diphosphate + (2E,6E)-farnesyl diphosphate = all-trans-decaprenyl diphosphate + 7 diphosphate. It functions in the pathway cofactor biosynthesis; ubiquinone biosynthesis. Supplies decaprenyl diphosphate, the precursor for the side chain of the isoprenoid quinones ubiquinone-10. The chain is Decaprenyl-diphosphate synthase subunit 1 (dps1) from Schizosaccharomyces pombe (strain 972 / ATCC 24843) (Fission yeast).